A 534-amino-acid chain; its full sequence is Chaperonin GroEL, chloroplastic (534 aa).

ATP-binding positions include 29–32 (TLGP), 86–90 (DGTTT), glycine 414, and aspartate 496.

The protein belongs to the chaperonin (HSP60) family. In terms of assembly, forms a cylinder of 14 subunits composed of two heptameric rings stacked back-to-back. Interacts with the co-chaperonin GroES.

The protein localises to the plastid. Its subcellular location is the chloroplast. It catalyses the reaction ATP + H2O + a folded polypeptide = ADP + phosphate + an unfolded polypeptide.. Its function is as follows. Together with its co-chaperonin GroES, plays an essential role in assisting protein folding. The GroEL-GroES system forms a nano-cage that allows encapsulation of the non-native substrate proteins and provides a physical environment optimized to promote and accelerate protein folding. The sequence is that of Chaperonin GroEL, chloroplastic from Galdieria sulphuraria (Red alga).